Consider the following 125-residue polypeptide: Egg cell-secreted protein 1.2 (125 aa).

A signal peptide spans 1–22 (MASNTSFLFATIAILLVLNISG).

The protein belongs to the plant egg cell-secreted peptide family. As to expression, restricted to female reproductive tissues, specifically accumulating in storage vesicles of the unfertilized egg cell.

Its subcellular location is the cytoplasmic vesicle. The protein resides in the secreted. Involved in the regulation of gamete interactions during the double fertilization and to prevent multiple-pollen tube attraction; mediates the redistribution of the gamete fusogen HAP2/GCS1 to the cell surface after secretion upon sperm arrival. This chain is Egg cell-secreted protein 1.2 (EC1.2), found in Arabidopsis thaliana (Mouse-ear cress).